The following is a 380-amino-acid chain: MRKNLWTFQFGGEASGLVGSAMVSQHFVVLLMSLYCLTQSVVESSSWWSLGMNPVQMPEVYIIGAQPLCSQLSGLSQGQKKLCQLYQDHMQFIGDGAKTGIKECQYQFRHRRWNCSTVDNTSVFGRVMQIGSRETAFTYAISAAGVVNAVSRACREGELSTCGCSRAARPKDLPRDWLWGGCGDNLDYGYRFAKEFVDAREREKIHQKGSYESSRIMMNLHNNEAGRRAVSTLADVACKCHGVSGSCSLKTCWLQLADFRKVGDHLKEKYDSAGAMKLNTRGKLVQVNNKFNSPTMNDLVYIDPSPDYCVHNESTGSLGTQGRLCNKTSEGMDGCELMCCGRGYDQFKTVQTERCHCKFHWCCYVKCKKCTEVVDQFACK.

Residues 1 to 40 (MRKNLWTFQFGGEASGLVGSAMVSQHFVVLLMSLYCLTQS) form the signal peptide. The cysteines at positions 104 and 115 are disulfide-linked. N-linked (GlcNAc...) asparagine glycosylation is found at Asn114 and Asn120. Cystine bridges form between Cys154–Cys162, Cys164–Cys182, Cys238–Cys252, Cys240–Cys247, Cys309–Cys340, Cys325–Cys335, Cys339–Cys379, Cys355–Cys370, Cys357–Cys367, and Cys362–Cys363. Ser244 is lipidated: O-palmitoleoyl serine; by PORCN. Asn312 and Asn326 each carry an N-linked (GlcNAc...) asparagine glycan.

Belongs to the Wnt family. Palmitoleoylation is required for efficient binding to frizzled receptors. Depalmitoleoylation leads to Wnt signaling pathway inhibition. As to expression, found primarily in ectoderm with lower levels of expression in mesoderm. Detected in the head and tail with lower expression in the middle of the embryo. No expression was found in the notochord.

Its subcellular location is the secreted. It is found in the extracellular space. The protein localises to the extracellular matrix. Functionally, ligand for members of the frizzled family of seven transmembrane receptors. Can activate or inhibit canonical Wnt signaling, depending on receptor context. Plays a role in normal embryonic development. In Xenopus laevis (African clawed frog), this protein is Protein Wnt-5a (wnt5a).